A 798-amino-acid polypeptide reads, in one-letter code: Integrin beta-1-B (798 aa).

The N-terminal stretch at Met1 to Ala21 is a signal peptide. Residues Gln22–Pro727 are Extracellular-facing. The PSI domain occupies Glu27–Pro77. 28 disulfides stabilise this stretch: Cys28–Cys46, Cys36–Cys464, Cys39–Cys65, Cys49–Cys76, Cys206–Cys212, Cys260–Cys300, Cys400–Cys414, Cys434–Cys462, Cys466–Cys486, Cys477–Cys489, Cys491–Cys500, Cys502–Cys533, Cys516–Cys531, Cys525–Cys536, Cys538–Cys553, Cys555–Cys576, Cys560–Cys574, Cys568–Cys579, Cys581–Cys590, Cys592–Cys615, Cys599–Cys613, Cys607–Cys618, Cys620–Cys630, Cys633–Cys636, Cys640–Cys691, Cys646–Cys665, Cys649–Cys661, and Cys699–Cys723. The interval Pro77–Asp106 is disordered. Asn109 and Asn131 each carry an N-linked (GlcNAc...) asparagine glycan. Residues Asp139–Leu377 form the VWFA domain. 2 residues coordinate Mg(2+): Ser151 and Ser153. Positions 153, 156, 157, and 188 each coordinate Ca(2+). N-linked (GlcNAc...) asparagine glycans are attached at residues Asn211 and Asn223. Ca(2+) contacts are provided by Asn243, Asp245, Pro247, and Glu248. Glu248 provides a ligand contact to Mg(2+). Residues Asn268 and Asn362 are each glycosylated (N-linked (GlcNAc...) asparagine). A glycan (N-linked (GlcNAc...) asparagine) is linked at Asn416. I-EGF domains are found at residues Cys466–Glu501, Cys502–Glu554, Cys555–Asp591, and Cys592–Glu631. Asn481 is a glycosylation site (N-linked (GlcNAc...) asparagine). The N-linked (GlcNAc...) asparagine glycan is linked to Asn520. A glycan (N-linked (GlcNAc...) asparagine) is linked at Asn584. Asn669 carries N-linked (GlcNAc...) asparagine glycosylation. A helical membrane pass occupies residues Asp728 to Trp751. Over Lys752–Lys798 the chain is Cytoplasmic. Position 783 is a phosphotyrosine (Tyr783).

Belongs to the integrin beta chain family. In terms of assembly, heterodimer of an alpha and a beta subunit.

It localises to the cell membrane. Its subcellular location is the cell projection. The protein resides in the invadopodium membrane. It is found in the ruffle membrane. The protein localises to the melanosome. It localises to the cleavage furrow. Its subcellular location is the lamellipodium. The protein resides in the ruffle. In terms of biological role, beta integrins associate with alpha subunits to form receptor complexes that recognize the sequence R-G-D in a wide array of ligands. May be involved in osteoblast compaction. May play role in myoblast differentiation and fusion during skeletal myogenesis. The chain is Integrin beta-1-B (itgb1-b) from Xenopus laevis (African clawed frog).